We begin with the raw amino-acid sequence, 138 residues long: Nucleoside diphosphate kinase (138 aa).

ATP-binding residues include lysine 9, phenylalanine 57, arginine 85, threonine 91, arginine 102, and asparagine 112. Histidine 115 (pros-phosphohistidine intermediate) is an active-site residue.

It belongs to the NDK family. As to quaternary structure, homotetramer. Mg(2+) is required as a cofactor.

The protein resides in the cytoplasm. The catalysed reaction is a 2'-deoxyribonucleoside 5'-diphosphate + ATP = a 2'-deoxyribonucleoside 5'-triphosphate + ADP. It carries out the reaction a ribonucleoside 5'-diphosphate + ATP = a ribonucleoside 5'-triphosphate + ADP. In terms of biological role, major role in the synthesis of nucleoside triphosphates other than ATP. The ATP gamma phosphate is transferred to the NDP beta phosphate via a ping-pong mechanism, using a phosphorylated active-site intermediate. The protein is Nucleoside diphosphate kinase of Deinococcus deserti (strain DSM 17065 / CIP 109153 / LMG 22923 / VCD115).